The chain runs to 150 residues: Urease accessory protein UreE (150 aa).

Belongs to the UreE family.

It localises to the cytoplasm. Involved in urease metallocenter assembly. Binds nickel. Probably functions as a nickel donor during metallocenter assembly. This chain is Urease accessory protein UreE, found in Parasynechococcus marenigrum (strain WH8102).